Reading from the N-terminus, the 283-residue chain is ATP phosphoribosyltransferase (283 aa).

Belongs to the ATP phosphoribosyltransferase family. Long subfamily. The cofactor is Mg(2+).

It is found in the cytoplasm. The enzyme catalyses 1-(5-phospho-beta-D-ribosyl)-ATP + diphosphate = 5-phospho-alpha-D-ribose 1-diphosphate + ATP. It functions in the pathway amino-acid biosynthesis; L-histidine biosynthesis; L-histidine from 5-phospho-alpha-D-ribose 1-diphosphate: step 1/9. Its activity is regulated as follows. Feedback inhibited by histidine. Its function is as follows. Catalyzes the condensation of ATP and 5-phosphoribose 1-diphosphate to form N'-(5'-phosphoribosyl)-ATP (PR-ATP). Has a crucial role in the pathway because the rate of histidine biosynthesis seems to be controlled primarily by regulation of HisG enzymatic activity. In Bifidobacterium longum (strain NCC 2705), this protein is ATP phosphoribosyltransferase.